Here is a 231-residue protein sequence, read N- to C-terminus: uncharacterized protein (231 aa).

The chain crosses the membrane as a helical span at residues 86 to 106 (LIILFVIGLIITIIGLLMYEP).

Its subcellular location is the membrane. This is an uncharacterized protein from Methanocaldococcus jannaschii (strain ATCC 43067 / DSM 2661 / JAL-1 / JCM 10045 / NBRC 100440) (Methanococcus jannaschii).